Reading from the N-terminus, the 131-residue chain is Ribosomally synthesized cyclic peptide phomopsin precursor gigA (131 aa).

A signal peptide spans 1 to 18; the sequence is MQFTLIFFYATLAAFGLA. Propeptides lie at residues 19 to 38, 48 to 65, 75 to 92, 102 to 119, and 129 to 131; these read APSE…LDKR, ADLV…LDKR, ADMV…LDKR, ADMV…LAKR, and ADM.

In terms of processing, gigA is processed by several endopeptidases including kexin proteases to produce 2 identical copies of the nonaxapeptide Ile-Asn-Phe-Lys-Ile-Pro-Tyr-Thr-Gly, one copy of the nonaketide Ile-Gly-Phe-Lys-Leu-Pro-Tyr-Arg-Gly and one copy of the nonaketide Pro-Asn-Phe-Lys-Met-Pro-Tyr-Arg-Gly, that are further modified into phomapsins B, C and A, respectively. After being excised from the precursor peptide, the core peptides are cyclized and modified post-translationally by enzymes encoded within the gene cluster. Epichloecyclin biosynthesis requires only dimethylation of the side-chain amino group of the conserved lysine for completion.

Its pathway is mycotoxin biosynthesis. Ribosomally synthesized cyclic peptide phomopsin precursor; part of the gene cluster that mediates the biosynthesis of the epichloecyclins, a group of nonapeptides, with a likely cyclic structure and dimethylation of the conserved lysine. The gigA translated product contains 4 repeated peptide embedding the nonapeptide Ile-Asn-Phe-Lys-Ile-Pro-Tyr-Thr-Gly in repeats 1 and 2, Ile-Gly-Phe-Lys-Leu-Pro-Tyr-Arg-Gly in repeat 3, and Pro-Asn-Phe-Lys-Met-Pro-Tyr-Arg-Gly in repeat 4 that are converted into epichloecyclins B, C and A, respectively. Moreover, removal of the last Gly residue in epichloecyclins B and C leads to epichloecyclins D and E, respectively. In Epichloe festucae (strain Fl1), this protein is Ribosomally synthesized cyclic peptide phomopsin precursor gigA (nc25).